A 749-amino-acid chain; its full sequence is EF-hand domain-containing family member C2 (749 aa).

3 DM10 domains span residues 75–182 (DKQV…RKIG), 226–368 (HGKI…KSKY), and 431–538 (KSNI…EQNT). An EF-hand domain is found at 558-593 (GKSRELKQVFKAADSKHTNMVDYNTFRDILMSLTVG).

As to quaternary structure, microtubule inner protein component of sperm flagellar doublet microtubules. As to expression, expressed in airway epithelial cells.

The protein localises to the cytoplasm. The protein resides in the cytoskeleton. It is found in the cilium axoneme. It localises to the flagellum axoneme. Microtubule inner protein (MIP) part of the dynein-decorated doublet microtubules (DMTs) in cilia axoneme, which is required for motile cilia beating. This is EF-hand domain-containing family member C2 from Homo sapiens (Human).